The chain runs to 86 residues: Small ribosomal subunit protein uS17 (86 aa).

Belongs to the universal ribosomal protein uS17 family. In terms of assembly, part of the 30S ribosomal subunit.

One of the primary rRNA binding proteins, it binds specifically to the 5'-end of 16S ribosomal RNA. The polypeptide is Small ribosomal subunit protein uS17 (Shouchella clausii (strain KSM-K16) (Alkalihalobacillus clausii)).